The following is a 323-amino-acid chain: Lipoyl synthase (323 aa).

The [4Fe-4S] cluster site is built by Cys61, Cys66, Cys72, Cys87, Cys91, Cys94, and Ser300. In terms of domain architecture, Radical SAM core spans 73–289; that stretch reads WDKKHATFMI…ETVAYSKGFL (217 aa).

Belongs to the radical SAM superfamily. Lipoyl synthase family. [4Fe-4S] cluster is required as a cofactor.

Its subcellular location is the cytoplasm. The enzyme catalyses [[Fe-S] cluster scaffold protein carrying a second [4Fe-4S](2+) cluster] + N(6)-octanoyl-L-lysyl-[protein] + 2 oxidized [2Fe-2S]-[ferredoxin] + 2 S-adenosyl-L-methionine + 4 H(+) = [[Fe-S] cluster scaffold protein] + N(6)-[(R)-dihydrolipoyl]-L-lysyl-[protein] + 4 Fe(3+) + 2 hydrogen sulfide + 2 5'-deoxyadenosine + 2 L-methionine + 2 reduced [2Fe-2S]-[ferredoxin]. The protein operates within protein modification; protein lipoylation via endogenous pathway; protein N(6)-(lipoyl)lysine from octanoyl-[acyl-carrier-protein]: step 2/2. Catalyzes the radical-mediated insertion of two sulfur atoms into the C-6 and C-8 positions of the octanoyl moiety bound to the lipoyl domains of lipoate-dependent enzymes, thereby converting the octanoylated domains into lipoylated derivatives. The polypeptide is Lipoyl synthase (Rhizobium etli (strain ATCC 51251 / DSM 11541 / JCM 21823 / NBRC 15573 / CFN 42)).